The sequence spans 427 residues: Trigger factor (427 aa).

A PPIase FKBP-type domain is found at 163-248 (GDTVVIDFVG…IHEVKAKEVP (86 aa)).

This sequence belongs to the FKBP-type PPIase family. Tig subfamily.

The protein localises to the cytoplasm. It catalyses the reaction [protein]-peptidylproline (omega=180) = [protein]-peptidylproline (omega=0). Involved in protein export. Acts as a chaperone by maintaining the newly synthesized protein in an open conformation. Functions as a peptidyl-prolyl cis-trans isomerase. In Streptococcus pneumoniae (strain JJA), this protein is Trigger factor.